Here is a 144-residue protein sequence, read N- to C-terminus: Large ribosomal subunit protein uL15 (144 aa).

Over residues 1–16 (MVVRKEKKSRKYRGYR) the composition is skewed to basic residues. Residues 1-35 (MVVRKEKKSRKYRGYRTHGWGTKGQHRDRGAQGGR) form a disordered region.

The protein belongs to the universal ribosomal protein uL15 family. Part of the 50S ribosomal subunit.

Functionally, binds to the 23S rRNA. In Sulfolobus acidocaldarius (strain ATCC 33909 / DSM 639 / JCM 8929 / NBRC 15157 / NCIMB 11770), this protein is Large ribosomal subunit protein uL15.